A 261-amino-acid polypeptide reads, in one-letter code: Cathepsin G (261 aa).

A signal peptide spans 1–18; that stretch reads MQPLLLLLTFILLQGDEA. The propeptide at 19–20 is activation peptide; sequence GK. The tract at residues 21-25 is important for antimicrobial activity; it reads IIGGR. The Peptidase S1 domain maps to 21–243; the sequence is IIGGREARPH…FMPWIKRTMR (223 aa). Cys49 and Cys65 are joined by a disulfide. His64 functions as the Charge relay system in the catalytic mechanism. Asn71 carries N-linked (GlcNAc...) asparagine glycosylation. The tract at residues 97-111 is important for antimicrobial activity; it reads HPDYNPQNIRNDIML. The Charge relay system role is filled by Asp108. 2 disulfide bridges follow: Cys142/Cys207 and Cys172/Cys186. The active-site Charge relay system is the Ser201.

The protein belongs to the peptidase S1 family. In adult, detected only in bone marrow where expression is restricted to a small population of early myeloid cells.

It is found in the cell membrane. The protein localises to the cytoplasmic granule. Its subcellular location is the secreted. The protein resides in the cytoplasm. It localises to the cytosol. It is found in the lysosome. The protein localises to the nucleus. The enzyme catalyses Specificity similar to chymotrypsin C.. Inhibited by chymostatin, phenylmethanesulfonyl fluoride and diisopropyl fluorophosphate. Its function is as follows. Serine protease with trypsin- and chymotrypsin-like specificity. Also displays antibacterial activity against Gram-negative and Gram-positive bacteria independent of its protease activity. Prefers Phe and Tyr residues in the P1 position of substrates but also cleaves efficiently after Trp and Leu. Shows a preference for negatively charged amino acids in the P2' position and for aliphatic amino acids both upstream and downstream of the cleavage site. Required for recruitment and activation of platelets which is mediated by the F2RL3/PAR4 platelet receptor. Binds reversibly to and stimulates B cells and CD4(+) and CD8(+) T cells. Also binds reversibly to natural killer (NK) cells and enhances NK cell cytotoxicity through its protease activity. Cleaves complement C3. Cleaves vimentin. Cleaves thrombin receptor F2R/PAR1. Cleaves the synovial mucin-type protein PRG4/lubricin. Cleaves and activates IL36G which promotes expression of chemokines CXCL1 and CXLC8 in keratinocytes. Cleaves IL33 into mature forms which have greater activity than the unprocessed form. Cleaves coagulation factor F8 to produce a partially activated form. Also cleaves and activates coagulation factor F10. Cleaves leukocyte cell surface protein SPN/CD43 to release its extracellular domain and trigger its intramembrane proteolysis by gamma-secretase, releasing the CD43 cytoplasmic tail chain (CD43-ct) which translocates to the nucleus. During apoptosis, cleaves SMARCA2/BRM to produce a 160 kDa cleavage product which localizes to the cytosol. Cleaves MBP in B cell lysosomes at '221-Phe-|-Lys-222', degrading the major immunogenic MBP epitope and preventing the activation of MBP-specific autoreactive T cells. Cleaves annexin ANXA1 and antimicrobial peptide CAMP to produce peptides which act on neutrophil N-formyl peptide receptors to enhance the release of CXCL2. Acts as a ligand for the N-formyl peptide receptor FPR1, enhancing phagocyte chemotaxis. Has antibacterial activity against the Gram-negative bacteria N.gonorrhoeae and P.aeruginosa. Likely to act against N.gonorrhoeae by interacting with N.gonorrhoeae penA/PBP2. Exhibits potent antimicrobial activity against the Gram-positive bacterium L.monocytogenes. Has antibacterial activity against the Gram-positive bacterium S.aureus and degrades S.aureus biofilms, allowing polymorphonuclear leukocytes to penetrate the biofilm and phagocytose bacteria. Has antibacterial activity against M.tuberculosis. Induces platelet aggregation which is strongly potentiated in the presence of ELANE. The chain is Cathepsin G (Ctsg) from Mus musculus (Mouse).